The chain runs to 265 residues: Small ribosomal subunit protein uS2 (265 aa).

Residues 226-265 are disordered; that stretch reads AAAPNSASVREEEFSADAADEGKGRRAPAKKGDKKADAAE. Residues 245 to 265 are compositionally biased toward basic and acidic residues; sequence DEGKGRRAPAKKGDKKADAAE.

It belongs to the universal ribosomal protein uS2 family.

The sequence is that of Small ribosomal subunit protein uS2 from Xanthomonas axonopodis pv. citri (strain 306).